The sequence spans 529 residues: Bifunctional purine biosynthesis protein PurH (529 aa).

One can recognise an MGS-like domain in the interval 1-146 (MAPTALLSVS…KNHAHVAVLT (146 aa)).

It belongs to the PurH family.

It catalyses the reaction (6R)-10-formyltetrahydrofolate + 5-amino-1-(5-phospho-beta-D-ribosyl)imidazole-4-carboxamide = 5-formamido-1-(5-phospho-D-ribosyl)imidazole-4-carboxamide + (6S)-5,6,7,8-tetrahydrofolate. The enzyme catalyses IMP + H2O = 5-formamido-1-(5-phospho-D-ribosyl)imidazole-4-carboxamide. It functions in the pathway purine metabolism; IMP biosynthesis via de novo pathway; 5-formamido-1-(5-phospho-D-ribosyl)imidazole-4-carboxamide from 5-amino-1-(5-phospho-D-ribosyl)imidazole-4-carboxamide (10-formyl THF route): step 1/1. The protein operates within purine metabolism; IMP biosynthesis via de novo pathway; IMP from 5-formamido-1-(5-phospho-D-ribosyl)imidazole-4-carboxamide: step 1/1. This Synechococcus sp. (strain CC9311) protein is Bifunctional purine biosynthesis protein PurH.